Here is a 574-residue protein sequence, read N- to C-terminus: NADH-ubiquinone oxidoreductase chain 5 (574 aa).

16 consecutive transmembrane segments (helical) span residues 10–30, 50–70, 87–107, 111–131, 141–161, 181–203, 211–231, 240–260, 280–300, 301–321, 340–360, 381–401, 423–443, 458–478, 489–509, and 554–574; these read VASKLMWVIFTGMLAPTLYMV, MMMTIILDPLGLMFSCTVVMI, FINRFTVLVLLFVLSMNMLIF, LIILLLGWDGLGIVSFILVIY, GMITALTNRIGDVMLLLAIAW, YQALVIIIAAMTKSAQMPFSSWL, TPVSALVHSSTLVTAGVFLLI, VWWFTTFLLFVAVSTTLMAGL, LGMMMAAMGLGMAHMAFFHMV, THAMFKALLFVCAGSFIHSHM, TSCLIMANLALCGFPFMSGFY, LILFAVGLTAFYSTRFTMCVV, MLLLASMSVISGSALTWILPL, TLMLVTLGALMSWFFLTTTNM, IINYFSCTMWFLVPLSSQFMM, and TPMNYLMMSSMLLLVATLVAI.

The protein belongs to the complex I subunit 5 family.

The protein localises to the mitochondrion inner membrane. It carries out the reaction a ubiquinone + NADH + 5 H(+)(in) = a ubiquinol + NAD(+) + 4 H(+)(out). Functionally, core subunit of the mitochondrial membrane respiratory chain NADH dehydrogenase (Complex I) that is believed to belong to the minimal assembly required for catalysis. Complex I functions in the transfer of electrons from NADH to the respiratory chain. The immediate electron acceptor for the enzyme is believed to be ubiquinone. The chain is NADH-ubiquinone oxidoreductase chain 5 (ND5) from Lumbricus terrestris (Common earthworm).